The sequence spans 239 residues: Heptaprenylglyceryl phosphate synthase (239 aa).

Sn-glycerol 1-phosphate is bound at residue Lys12. Residues Asp14 and Thr40 each contribute to the Mg(2+) site. Sn-glycerol 1-phosphate is bound by residues 159–164 (YLEYSG), Gly189, and 209–210 (GN).

The protein belongs to the GGGP/HepGP synthase family. Group I subfamily. Homodimer. Mg(2+) serves as cofactor.

The enzyme catalyses sn-glycerol 1-phosphate + all-trans-heptaprenyl diphosphate = 3-heptaprenyl-sn-glycero-1-phosphate + diphosphate. Its pathway is membrane lipid metabolism; glycerophospholipid metabolism. Its function is as follows. Prenyltransferase that catalyzes in vivo the transfer of the heptaprenyl moiety of heptaprenyl pyrophosphate (HepPP; 35 carbon atoms) to the C3 hydroxyl of sn-glycerol-1-phosphate (G1P), producing heptaprenylglyceryl phosphate (HepGP). This reaction is an ether-bond-formation step in the biosynthesis of archaea-type G1P-based membrane lipids found in Bacillales. This Geobacillus thermodenitrificans (strain NG80-2) protein is Heptaprenylglyceryl phosphate synthase.